Here is a 146-residue protein sequence, read N- to C-terminus: MTLTKGSFTYSSGEEYRGEWKEGRRHGFGQLVFADGGTYLGHFENGLFNGFGVLTFSDGSRYEGEFSQGKFNGVGVFIRYDNMTFEGEFKNGRVDGFGLLTFPDGSHGIPRNEGLFENNKLLRREKCSAVVQRAQSASKSARNLTA.

MORN repeat units lie at residues 16-38 (YRGE…DGGT), 39-61 (YLGH…DGSR), 62-84 (YEGE…DNMT), and 85-107 (FEGE…DGSH).

Interacts with MYO3A.

It localises to the cytoplasm. Its subcellular location is the cell projection. The protein localises to the filopodium tip. It is found in the stereocilium. Its function is as follows. Plays a role in promoting axonal degeneration following neuronal injury by toxic insult or trauma. This chain is MORN repeat-containing protein 4 (Morn4), found in Mus musculus (Mouse).